The sequence spans 76 residues: Small proline-rich protein 4 (76 aa).

Positions 38 to 76 (PKTKDPCVPQAKKQCPARSTTNPAQEKCPAQQDPKCKQK) are disordered.

The protein belongs to the cornifin (SPRR) family. In terms of processing, cross-linked to membrane proteins by transglutaminase.

It is found in the cytoplasm. Its subcellular location is the cell cortex. Cross-linked envelope protein of keratinocytes. Involved in UV-induced cornification. The sequence is that of Small proline-rich protein 4 (Sprr4) from Mus musculus (Mouse).